The sequence spans 292 residues: Techylectin-5A (292 aa).

The signal sequence occupies residues 1 to 23; the sequence is MHNLRNILFVITLIGQKYGLTSS. Pyrrolidone carboxylic acid is present on Gln-24. Residues 63–286 form the Fibrinogen C-terminal domain; that stretch reads PIVSPDPTDC…QVEMKIRPVE (224 aa). Residues Cys-72 and Cys-103 are joined by a disulfide bond. N-linked (GlcNAc...) asparagine glycans are attached at residues Asn-173, Asn-198, and Asn-214. Positions 221, 225, and 227 each coordinate Ca(2+). Cys-229 and Cys-242 are joined by a disulfide.

Multimeric. PubMed:10468566 and PubMed:11707569 are in disagreement about the nature of the multimer, PubMed:10468566 finds hexamers and octamers, the results in PubMed:11707569 suggest tetramers. As to expression, strongly expressed in heart and intestine, weakly expressed in hepatopancreas. Not found in hemocytes, stomach, nervous tissue or skeletal muscle.

It is found in the secreted. Lectin involved in innate immunity. Agglutinates all types of human erythrocytes, Gram-positive and Gram-negative bacteria. Has a stronger agglutinating activity towards Gram-negative bacteria than towards Gram-positive bacteria. Specifically recognizes acetyl group-containing substances on agglutinated cells. The hemagglutinating activity was inhibited by EDTA, acetyl group-containing mono- and disaccharides, N-acetyl derivatives of amino acids, other acetyl group-containing substances, propionamide and benzamide. Enhances the antimicrobial activity of big defensin against Gram-positive bacteria but not against Gram-negative bacteria. The polypeptide is Techylectin-5A (Tachypleus tridentatus (Japanese horseshoe crab)).